The primary structure comprises 236 residues: Uridylate kinase (236 aa).

10–13 (KLSG) serves as a coordination point for ATP. UMP is bound at residue G52. G53 and R57 together coordinate ATP. UMP contacts are provided by residues D72 and 133–140 (TGNPFFTT). T160, Y166, and D169 together coordinate ATP.

Belongs to the UMP kinase family. Homohexamer.

Its subcellular location is the cytoplasm. The enzyme catalyses UMP + ATP = UDP + ADP. The protein operates within pyrimidine metabolism; CTP biosynthesis via de novo pathway; UDP from UMP (UMPK route): step 1/1. With respect to regulation, inhibited by UTP. Its function is as follows. Catalyzes the reversible phosphorylation of UMP to UDP. The chain is Uridylate kinase from Polaromonas sp. (strain JS666 / ATCC BAA-500).